The primary structure comprises 296 residues: 4-hydroxybenzoate octaprenyltransferase (296 aa).

Transmembrane regions (helical) follow at residues 28 to 48 (PIGI…AGNG), 55 to 75 (VLIF…INDF), 102 to 122 (AVML…CTNA), 145 to 167 (TYYP…FTAA), 174 to 196 (SAWL…YAMV), 219 to 239 (VIIL…GNRF), 241 to 261 (LGGW…WEFW), and 275 to 295 (FLHN…DYAL).

Belongs to the UbiA prenyltransferase family. Mg(2+) is required as a cofactor.

It is found in the cell inner membrane. The enzyme catalyses all-trans-octaprenyl diphosphate + 4-hydroxybenzoate = 4-hydroxy-3-(all-trans-octaprenyl)benzoate + diphosphate. It functions in the pathway cofactor biosynthesis; ubiquinone biosynthesis. Its function is as follows. Catalyzes the prenylation of para-hydroxybenzoate (PHB) with an all-trans polyprenyl group. Mediates the second step in the final reaction sequence of ubiquinone-8 (UQ-8) biosynthesis, which is the condensation of the polyisoprenoid side chain with PHB, generating the first membrane-bound Q intermediate 3-octaprenyl-4-hydroxybenzoate. This chain is 4-hydroxybenzoate octaprenyltransferase, found in Pseudomonas entomophila (strain L48).